The primary structure comprises 631 residues: Cyclic nucleotide-gated channel alpha-3 (631 aa).

The segment covering 1–18 has biased composition (polar residues); the sequence is MAKVNTQCSQPSPTQLSI. 2 disordered regions span residues 1 to 21 and 71 to 98; these read MAKV…IKNA and EVST…RKEE. Over 1–111 the chain is Cytoplasmic; it reads MAKVNTQCSQ…VDPSSNIYYR (111 aa). Basic and acidic residues predominate over residues 87 to 98; sequence KPPDGGEGRKEE. The helical transmembrane segment at 112–133 threads the bilayer; sequence WLTAIALPVFYNWCLLVCRACF. Residues 134–139 lie on the Extracellular side of the membrane; sequence DELQSE. A helical membrane pass occupies residues 140–160; sequence HLTLWLVLDYSADVLYVLDML. Over 161-187 the chain is Cytoplasmic; it reads VRARTGFLEQGLMVRDTKRLWKHYTKT. The chain crosses the membrane as a helical span at residues 188 to 207; that stretch reads LHFKLDILSLIPTDLAYLKL. Over 208 to 211 the chain is Extracellular; it reads GVNY. Residues 212-229 traverse the membrane as a helical segment; the sequence is PELRFNRLLKFSRLFEFF. Residues 230–239 lie on the Cytoplasmic side of the membrane; it reads DRTETRTNYP. The segment at 239–347 is ion conduction pathway; it reads PNVFRIGNLV…GNVGSMISNM (109 aa). Residues 240 to 262 traverse the membrane as a helical segment; it reads NVFRIGNLVLYTLIIIHWNACIY. Residues 263 to 288 are Extracellular-facing; the sequence is FAISKFIGFGTDSWVYPNTSKPEYAR. An N-linked (GalNAc...) asparagine glycan is attached at N280. The next 2 membrane-spanning stretches (helical) occupy residues 289–319 and 320–344; these read LSRK…DEEY and LFVV…GSMI. The segment at 306-309 is selectivity filter; that stretch reads TIGE. Residues 345–631 lie on the Cytoplasmic side of the membrane; it reads SNMNAPRVEF…ENSEDASKTD (287 aa). The interval 349 to 426 is C-linker; it reads APRVEFQAKI…TLKKVRIFQD (78 aa). Positions 429–549 are cyclic nucleotide-binding domain; the sequence is AGLLVELVLK…EEKGRQILMK (121 aa). The 3',5'-cyclic GMP site is built by G489, E490, S492, R505, T506, and D550. The stretch at 567–610 forms a coiled coil; the sequence is VEEKVEYLESSLDILQTRFARLLAEYSASQMKLKQRLTRLESQM.

Belongs to the cyclic nucleotide-gated cation channel (TC 1.A.1.5) family. CNGA3 subfamily. In terms of assembly, forms heterotetrameric channels composed of CNGA3 and CNGB3 subunits with 3:1 stoichiometry. In terms of tissue distribution, prominently expressed in retina.

The protein localises to the cell membrane. It carries out the reaction Ca(2+)(in) = Ca(2+)(out). The catalysed reaction is Na(+)(in) = Na(+)(out). It catalyses the reaction K(+)(in) = K(+)(out). The enzyme catalyses NH4(+)(in) = NH4(+)(out). It carries out the reaction Rb(+)(in) = Rb(+)(out). The catalysed reaction is Li(+)(in) = Li(+)(out). It catalyses the reaction Cs(+)(in) = Cs(+)(out). In terms of biological role, pore-forming subunit of the cone cyclic nucleotide-gated channel. Mediates cone photoresponses at bright light converting transient changes in intracellular cGMP levels into electrical signals. In the dark, cGMP levels are high and keep the channel open enabling a steady inward current carried by Na(+) and Ca(2+) ions that leads to membrane depolarization and neurotransmitter release from synaptic terminals. Upon photon absorption cGMP levels decline leading to channel closure and membrane hyperpolarization that ultimately slows neurotransmitter release and signals the presence of light, the end point of the phototransduction cascade. Pore-forming subunit of the gustatory cyclic nucleotide-gated channel. In the taste buds, may sense oral extracellular pH and conduct ion currents that modulate the excitability of taste cells. Conducts cGMP- and cAMP-gated ion currents, with permeability for monovalent and divalent cations. In Mus musculus (Mouse), this protein is Cyclic nucleotide-gated channel alpha-3.